We begin with the raw amino-acid sequence, 689 residues long: MSEKTFLVEIGTEELPPKALRSLAESFAANFTAELDNAGLAHGNVEWFAAPRRLALKVANLAESQPDREVEKRGPAIAQAFDAEGKPSKAAEGWARGCGITVDQAERLKTDKGEWLLYRAHVKGESTEALVPNMVATSLAKLPIPKLMRWGASDVHFVRPVHTVTLLLGDKVIPATILGIQSDRVIRGHRFMGEPEFTIDNADQYPQILLERGKVIADYEARKAKIKADAEEAARKIGGNADLSESLLEEVASLVEWPVVLTAKFEEKFLAVPAEALVYTMKGDQKYFPVYDNAGKLLPNFIFVANIESKDPTQIISGNEKVVRPRLADAEFFFNTDRKKRLEDHLPRLQTVLFQQQLGTLRDKTDRIQALAGWIAGQIGADVNHATRAGLLSKCDLMTNMVFEFTDTQGVMGMHYARHDGEAEDVAVALNEQYQPRFAGDDLPSNPVACALAIADKMDTLAGIFGIGQHPKGDKDPFALRRAALGVLRIIVEKNLNLDLQTLTEEAARLYGDKLTNANVVDDVIDFMLGRFRAWYQDEGYTVDTIQAVLARRPTRPADFDARMKAVSHFRTLEEASALAAANKRVSNILAKATEPLNDIVHASVLKEAAEIELARHLVVLRDKLQPYFADGRYQEALIELAALRAPVDEFFENVMVNAEEKDIRINRLTLLSKLRELFLQVADISLLQ.

This sequence belongs to the class-II aminoacyl-tRNA synthetase family. In terms of assembly, tetramer of two alpha and two beta subunits.

The protein localises to the cytoplasm. The enzyme catalyses tRNA(Gly) + glycine + ATP = glycyl-tRNA(Gly) + AMP + diphosphate. In Salmonella schwarzengrund (strain CVM19633), this protein is Glycine--tRNA ligase beta subunit.